Consider the following 865-residue polypeptide: Leucine--tRNA ligase (865 aa).

A 'HIGH' region motif is present at residues 48–58 (PYPSGQLHVGH). A 'KMSKS' region motif is present at residues 626 to 630 (KMSKS). ATP is bound at residue lysine 629.

The protein belongs to the class-I aminoacyl-tRNA synthetase family.

Its subcellular location is the cytoplasm. It carries out the reaction tRNA(Leu) + L-leucine + ATP = L-leucyl-tRNA(Leu) + AMP + diphosphate. The polypeptide is Leucine--tRNA ligase (Gluconobacter oxydans (strain 621H) (Gluconobacter suboxydans)).